The chain runs to 209 residues: tRNA (guanine-N(7)-)-methyltransferase (209 aa).

Residues Asp35, Glu60, Asn87, and Asp113 each coordinate S-adenosyl-L-methionine. Asp113 is an active-site residue. Positions 117 and 149 each coordinate substrate.

It belongs to the class I-like SAM-binding methyltransferase superfamily. TrmB family.

The catalysed reaction is guanosine(46) in tRNA + S-adenosyl-L-methionine = N(7)-methylguanosine(46) in tRNA + S-adenosyl-L-homocysteine. It functions in the pathway tRNA modification; N(7)-methylguanine-tRNA biosynthesis. Its function is as follows. Catalyzes the formation of N(7)-methylguanine at position 46 (m7G46) in tRNA. The polypeptide is tRNA (guanine-N(7)-)-methyltransferase (Prochlorococcus marinus (strain MIT 9515)).